A 595-amino-acid polypeptide reads, in one-letter code: Pectinesterase 5 (595 aa).

The signal sequence occupies residues 1 to 24; the sequence is MIGKVVVSVASILLIVGVAIGVVA. Asn86 and Asn206 each carry an N-linked (GlcNAc...) asparagine glycan. A disordered region spans residues 215 to 239; sequence SDKGAAPVNKGTPPVADDSPVADPD. The span at 227–239 shows a compositional bias: low complexity; it reads PPVADDSPVADPD. Positions 243-246 match the RRLL cleavage motif motif; sequence RRLL. Positions 263–266 match the RKLM cleavage motif motif; sequence RKLM. Asn349 carries N-linked (GlcNAc...) asparagine glycosylation. Substrate is bound by residues Thr360 and Gln390. Catalysis depends on Asp413, which acts as the Proton donor. Catalysis depends on Asp434, which acts as the Nucleophile. The substrate site is built by Arg503 and Trp505.

It in the N-terminal section; belongs to the PMEI family. This sequence in the C-terminal section; belongs to the pectinesterase family. As to quaternary structure, interacts with SBT6.1. As to expression, expressed in pollen grains and pollen tubes.

The protein localises to the cell membrane. It is found in the secreted. Its subcellular location is the cell wall. The protein resides in the golgi apparatus membrane. The catalysed reaction is [(1-&gt;4)-alpha-D-galacturonosyl methyl ester](n) + n H2O = [(1-&gt;4)-alpha-D-galacturonosyl](n) + n methanol + n H(+). The protein operates within glycan metabolism; pectin degradation; 2-dehydro-3-deoxy-D-gluconate from pectin: step 1/5. Its function is as follows. Acts in the modification of cell walls via demethylesterification of cell wall pectin. Plays an important role in growth of pollen tubes in female floral tissues, possibly via enhancing the interaction between the pollen tube and female floral tissues by modification of the cell walls. May be regulated by MYB80 during anther development and play a role in tapetum and pollen development. The sequence is that of Pectinesterase 5 (PME5) from Arabidopsis thaliana (Mouse-ear cress).